We begin with the raw amino-acid sequence, 525 residues long: Beta-1,4-xylosyltransferase IRX14 (525 aa).

Residues 1-35 (MKLSALHQSYLNRRSNSFRSPTSLDSSVDGSGKSL) lie on the Cytoplasmic side of the membrane. The chain crosses the membrane as a helical; Signal-anchor for type II membrane protein span at residues 36–56 (IAVFWLILHCLCCLISLVLGF). The Lumenal segment spans residues 57–525 (RFSRLVFFFL…SSSSKHQERN (469 aa)). N-linked (GlcNAc...) asparagine glycosylation is found at Asn-102, Asn-204, and Asn-326. The disordered stretch occupies residues 452 to 525 (RTPWPDVPPE…SSSSKHQERN (74 aa)). Polar residues predominate over residues 471–488 (PLSQGNTVVVIPKQQQHP). A compositionally biased stretch (basic residues) spans 489 to 503 (TKIRKPKRKSKKSKH). Residues 508-519 (TDTTTQVYSSSS) are compositionally biased toward polar residues.

This sequence belongs to the glycosyltransferase 43 family. Expressed in developing interfascicular fibers and xylem cells in stems and developing secondary xylem in roots.

The protein localises to the golgi apparatus membrane. The catalysed reaction is [(1-&gt;4)-beta-D-xylan](n) + UDP-alpha-D-xylose = [(1-&gt;4)-beta-D-xylan](n+1) + UDP + H(+). Its function is as follows. Involved in the synthesis of the hemicellulose glucuronoxylan, a major component of secondary cell walls. Involved in the elongation of glucuronoxylan xylosyl backbone. Xylan xylosyltransferase that acts cooperatively with IRX9 to achieve the successive addition of xylosyl residues during xylan backbone elongation. Required for the proper composition and structural properties of released seed coat mucilage. Required for the production of highly branched xylan polymers in seed coat mucilage. Xylan with xylose side chains seems to be necessary for pectin attachment to the seed surface. Together with MUCI70, required for xylan and pectin synthesis in seed coat epidermal (SCE) cells. This is Beta-1,4-xylosyltransferase IRX14 from Arabidopsis thaliana (Mouse-ear cress).